We begin with the raw amino-acid sequence, 260 residues long: Acyl-[acyl-carrier-protein]--UDP-N-acetylglucosamine O-acyltransferase (260 aa).

This sequence belongs to the transferase hexapeptide repeat family. LpxA subfamily. In terms of assembly, homotrimer.

Its subcellular location is the cytoplasm. The catalysed reaction is a (3R)-hydroxyacyl-[ACP] + UDP-N-acetyl-alpha-D-glucosamine = a UDP-3-O-[(3R)-3-hydroxyacyl]-N-acetyl-alpha-D-glucosamine + holo-[ACP]. Its pathway is glycolipid biosynthesis; lipid IV(A) biosynthesis; lipid IV(A) from (3R)-3-hydroxytetradecanoyl-[acyl-carrier-protein] and UDP-N-acetyl-alpha-D-glucosamine: step 1/6. In terms of biological role, involved in the biosynthesis of lipid A, a phosphorylated glycolipid that anchors the lipopolysaccharide to the outer membrane of the cell. This chain is Acyl-[acyl-carrier-protein]--UDP-N-acetylglucosamine O-acyltransferase, found in Aliarcobacter butzleri (strain RM4018) (Arcobacter butzleri).